The primary structure comprises 56 residues: uncharacterized protein (56 aa).

Residues 33 to 53 traverse the membrane as a helical segment; that stretch reads INIIYLAIMKIIMNIIMMIMI.

Its subcellular location is the host membrane. This is an uncharacterized protein from Bos taurus (Bovine).